The chain runs to 252 residues: Isoprenyl transferase (252 aa).

Residue Asp32 is part of the active site. Residue Asp32 coordinates Mg(2+). Substrate is bound by residues 33–36 (GNGR), Trp37, Arg45, His49, and 77–79 (STE). Asn80 serves as the catalytic Proton acceptor. Substrate contacts are provided by residues Trp81, Arg83, Arg200, and 206 to 208 (RLS). A Mg(2+)-binding site is contributed by Glu219.

It belongs to the UPP synthase family. Homodimer. Requires Mg(2+) as cofactor.

Its function is as follows. Catalyzes the condensation of isopentenyl diphosphate (IPP) with allylic pyrophosphates generating different type of terpenoids. This Listeria monocytogenes serotype 4b (strain F2365) protein is Isoprenyl transferase.